Consider the following 358-residue polypeptide: Heat-inducible transcription repressor HrcA (358 aa).

It belongs to the HrcA family.

In terms of biological role, negative regulator of class I heat shock genes (grpE-dnaK-dnaJ and groELS operons). Prevents heat-shock induction of these operons. This chain is Heat-inducible transcription repressor HrcA, found in Caulobacter vibrioides (strain ATCC 19089 / CIP 103742 / CB 15) (Caulobacter crescentus).